A 222-amino-acid polypeptide reads, in one-letter code: Iodotyrosine deiodinase (222 aa).

FMN contacts are provided by residues 34–38 (RRTVR) and 61–62 (PS). Residues Glu91, Tyr95, and Lys116 each contribute to the 3-iodo-L-tyrosine site. FMN contacts are provided by residues 171–173 (THT) and Arg212.

The protein belongs to the nitroreductase family. As to quaternary structure, homodimer. FMN serves as cofactor.

The enzyme catalyses 2 iodide + L-tyrosine + 2 NADP(+) = 3,5-diiodo-L-tyrosine + 2 NADPH + H(+). It catalyses the reaction iodide + L-tyrosine + NADP(+) = 3-iodo-L-tyrosine + NADPH. The catalysed reaction is 3-iodo-L-tyrosine + iodide + NADP(+) = 3,5-diiodo-L-tyrosine + NADPH + H(+). It carries out the reaction L-tyrosine + chloride + NADP(+) = 3-chloro-L-tyrosine + NADPH. The enzyme catalyses bromide + L-tyrosine + NADP(+) = 3-bromo-L-tyrosine + NADPH. Catalyzes the dehalogenation of halotyrosines such as 3-iodo-L-tyrosine and 3,5-diiodo-L-tyrosine. Likely to also catalyze the dehalogenation of other halotyrosines such as 3-bromo-L-tyrosine, 3-chloro-L-tyrosine and 3-iodo-L-tyrosine. Activity towards 3-iodo-L-tyrosine is much stronger than activity towards 3,5-diiodo-L-tyrosine and 2-iodophenol. In Haliscomenobacter hydrossis (strain ATCC 27775 / DSM 1100 / LMG 10767 / O), this protein is Iodotyrosine deiodinase.